We begin with the raw amino-acid sequence, 210 residues long: MSRALLTLVQWLSPAFPTGAFAYSHGLEWAIAEGEVQDAAGVEQWVADILRFGSGRTDAILLAHALKGHDLEALSDLARALAPSAERLRETEEQGAAFAATTAALTGRALPPRPLPVAIGQAAAALGRPVTEVLELTLHAFAANLVSAAVRFVPLGQTEGQAILSSLHPLIEEIARESAEAPIEAIGSAAVRGDLAAMRHETQQVRIFKT.

Belongs to the UreF family. In terms of assembly, ureD, UreF and UreG form a complex that acts as a GTP-hydrolysis-dependent molecular chaperone, activating the urease apoprotein by helping to assemble the nickel containing metallocenter of UreC. The UreE protein probably delivers the nickel.

It is found in the cytoplasm. Functionally, required for maturation of urease via the functional incorporation of the urease nickel metallocenter. This chain is Urease accessory protein UreF, found in Cereibacter sphaeroides (strain ATCC 17025 / ATH 2.4.3) (Rhodobacter sphaeroides).